The chain runs to 252 residues: Imidazole glycerol phosphate synthase subunit HisF (252 aa).

Residues aspartate 11 and aspartate 130 contribute to the active site.

Belongs to the HisA/HisF family. Heterodimer of HisH and HisF.

It is found in the cytoplasm. The catalysed reaction is 5-[(5-phospho-1-deoxy-D-ribulos-1-ylimino)methylamino]-1-(5-phospho-beta-D-ribosyl)imidazole-4-carboxamide + L-glutamine = D-erythro-1-(imidazol-4-yl)glycerol 3-phosphate + 5-amino-1-(5-phospho-beta-D-ribosyl)imidazole-4-carboxamide + L-glutamate + H(+). It participates in amino-acid biosynthesis; L-histidine biosynthesis; L-histidine from 5-phospho-alpha-D-ribose 1-diphosphate: step 5/9. Functionally, IGPS catalyzes the conversion of PRFAR and glutamine to IGP, AICAR and glutamate. The HisF subunit catalyzes the cyclization activity that produces IGP and AICAR from PRFAR using the ammonia provided by the HisH subunit. This Thermococcus onnurineus (strain NA1) protein is Imidazole glycerol phosphate synthase subunit HisF.